Consider the following 84-residue polypeptide: Small ribosomal subunit protein uS17 (84 aa).

This sequence belongs to the universal ribosomal protein uS17 family. Part of the 30S ribosomal subunit.

One of the primary rRNA binding proteins, it binds specifically to the 5'-end of 16S ribosomal RNA. This is Small ribosomal subunit protein uS17 from Clostridium perfringens (strain ATCC 13124 / DSM 756 / JCM 1290 / NCIMB 6125 / NCTC 8237 / Type A).